Reading from the N-terminus, the 74-residue chain is Conotoxin VnMEKL-0222 (74 aa).

An N-terminal signal peptide occupies residues 1–19 (MEKLTILLLVAAVLMSTQA). The propeptide occupies 20–46 (LIQEKRPKEKIKFLSKRKSIPESWWEG). Intrachain disulfides connect Cys48–Cys62, Cys55–Cys66, and Cys61–Cys71.

This sequence belongs to the conotoxin O2 superfamily. In terms of tissue distribution, expressed by the venom duct.

The protein localises to the secreted. The chain is Conotoxin VnMEKL-0222 from Conus ventricosus (Mediterranean cone).